Reading from the N-terminus, the 214-residue chain is Thymidylate kinase (214 aa).

10–17 (GGEGVGKT) contacts ATP.

The protein belongs to the thymidylate kinase family.

It catalyses the reaction dTMP + ATP = dTDP + ADP. In terms of biological role, phosphorylation of dTMP to form dTDP in both de novo and salvage pathways of dTTP synthesis. This is Thymidylate kinase from Bartonella quintana (strain Toulouse) (Rochalimaea quintana).